A 702-amino-acid polypeptide reads, in one-letter code: Translation factor GUF1 homolog, chloroplastic (702 aa).

Residues 1–30 (MASAAPASRGAARASTAARDAPFAAAARGP) are compositionally biased toward low complexity. Positions 1–41 (MASAAPASRGAARASTAARDAPFAAAARGPGRFRRDGNGRN) are disordered. A tr-type G domain is found at 87 to 283 (SQIRNFSIIA…NIVKMIPPPP (197 aa)). GTP-binding positions include 96 to 103 (AHIDHGKS), 162 to 166 (DTPGH), and 216 to 219 (NKID).

Belongs to the TRAFAC class translation factor GTPase superfamily. Classic translation factor GTPase family. LepA subfamily.

The protein localises to the plastid. The protein resides in the chloroplast. It carries out the reaction GTP + H2O = GDP + phosphate + H(+). Its function is as follows. Promotes chloroplast protein synthesis. May act as a fidelity factor of the translation reaction, by catalyzing a one-codon backward translocation of tRNAs on improperly translocated ribosomes. The polypeptide is Translation factor GUF1 homolog, chloroplastic (Micromonas pusilla (strain CCMP1545) (Picoplanktonic green alga)).